A 301-amino-acid polypeptide reads, in one-letter code: UPF0282 protein Pcal_1546 (301 aa).

The protein belongs to the UPF0282 family.

The protein is UPF0282 protein Pcal_1546 of Pyrobaculum calidifontis (strain DSM 21063 / JCM 11548 / VA1).